Reading from the N-terminus, the 344-residue chain is Dihydroorotase (344 aa).

Residues histidine 13 and histidine 15 each contribute to the Zn(2+) site. Substrate contacts are provided by residues 15-17 (HLR) and asparagine 41. Residues lysine 98, histidine 135, and histidine 173 each contribute to the Zn(2+) site. Lysine 98 bears the N6-carboxylysine mark. Residue histidine 135 coordinates substrate. Leucine 218 provides a ligand contact to substrate. Aspartate 247 is a Zn(2+) binding site. The active site involves aspartate 247. Substrate contacts are provided by histidine 251 and alanine 263.

Belongs to the metallo-dependent hydrolases superfamily. DHOase family. Class II DHOase subfamily. As to quaternary structure, homodimer. It depends on Zn(2+) as a cofactor.

The enzyme catalyses (S)-dihydroorotate + H2O = N-carbamoyl-L-aspartate + H(+). It participates in pyrimidine metabolism; UMP biosynthesis via de novo pathway; (S)-dihydroorotate from bicarbonate: step 3/3. Functionally, catalyzes the reversible cyclization of carbamoyl aspartate to dihydroorotate. The sequence is that of Dihydroorotase from Neisseria meningitidis serogroup C / serotype 2a (strain ATCC 700532 / DSM 15464 / FAM18).